The following is a 264-amino-acid chain: Glutamate racemase (264 aa).

Substrate is bound by residues 10–11 (DS) and 42–43 (YG). Cys-73 functions as the Proton donor/acceptor in the catalytic mechanism. Substrate is bound at residue 74 to 75 (NT). Catalysis depends on Cys-183, which acts as the Proton donor/acceptor. Substrate is bound at residue 184 to 185 (TH).

Belongs to the aspartate/glutamate racemases family.

It catalyses the reaction L-glutamate = D-glutamate. It participates in cell wall biogenesis; peptidoglycan biosynthesis. Provides the (R)-glutamate required for cell wall biosynthesis. The chain is Glutamate racemase from Streptococcus equi subsp. zooepidemicus (strain H70).